The chain runs to 477 residues: tRNA-2-methylthio-N(6)-dimethylallyladenosine synthase (477 aa).

The MTTase N-terminal domain maps to 3-120 (KKLHIKTWGC…LPAMIKQVQE (118 aa)). The [4Fe-4S] cluster site is built by cysteine 12, cysteine 49, cysteine 83, cysteine 157, cysteine 161, and cysteine 164. The 233-residue stretch at 143-375 (RAEGATAFVS…QHVINNQSMQ (233 aa)) folds into the Radical SAM core domain. The 64-residue stretch at 378–441 (RAMLGSTQRI…PNSLRGRFIR (64 aa)) folds into the TRAM domain.

This sequence belongs to the methylthiotransferase family. MiaB subfamily. As to quaternary structure, monomer. The cofactor is [4Fe-4S] cluster.

The protein resides in the cytoplasm. It catalyses the reaction N(6)-dimethylallyladenosine(37) in tRNA + (sulfur carrier)-SH + AH2 + 2 S-adenosyl-L-methionine = 2-methylsulfanyl-N(6)-dimethylallyladenosine(37) in tRNA + (sulfur carrier)-H + 5'-deoxyadenosine + L-methionine + A + S-adenosyl-L-homocysteine + 2 H(+). Functionally, catalyzes the methylthiolation of N6-(dimethylallyl)adenosine (i(6)A), leading to the formation of 2-methylthio-N6-(dimethylallyl)adenosine (ms(2)i(6)A) at position 37 in tRNAs that read codons beginning with uridine. The polypeptide is tRNA-2-methylthio-N(6)-dimethylallyladenosine synthase (Aeromonas salmonicida (strain A449)).